Here is a 213-residue protein sequence, read N- to C-terminus: Cysteine dioxygenase (213 aa).

The Fe cation site is built by H100, H102, and H160. Residues 107–177 constitute a cross-link (3'-(S-cysteinyl)-tyrosine (Cys-Tyr)); sequence CVMKVLKGSL…TNFAISLHLY (71 aa).

It belongs to the cysteine dioxygenase family. Fe cation serves as cofactor. Post-translationally, the thioether cross-link between Cys-107 and Tyr-177 plays a structural role through stabilizing the Fe(2+) ion, and prevents the production of highly damaging free hydroxyl radicals by holding the oxygen radical via hydroxyl hydrogen.

It catalyses the reaction L-cysteine + O2 = 3-sulfino-L-alanine + H(+). The polypeptide is Cysteine dioxygenase (CDO1) (Ajellomyces capsulatus (strain G186AR / H82 / ATCC MYA-2454 / RMSCC 2432) (Darling's disease fungus)).